Here is a 438-residue protein sequence, read N- to C-terminus: Beta-1,3-galactosyl-O-glycosyl-glycoprotein beta-1,6-N-acetylglucosaminyltransferase 3 (438 aa).

Topologically, residues 1–6 are cytoplasmic; it reads MVQWKR. The helical; Signal-anchor for type II membrane protein transmembrane segment at 7–26 threads the bilayer; sequence LCQLHYLWALGCYMLLATVA. Residues 27 to 438 lie on the Lumenal side of the membrane; that stretch reads LKLSFRLKCD…RYKAIYGTEL (412 aa). Intrachain disulfides connect cysteine 70–cysteine 227, cysteine 161–cysteine 382, cysteine 182–cysteine 209, and cysteine 391–cysteine 423. Asparagine 289 carries N-linked (GlcNAc...) asparagine glycosylation.

The protein belongs to the glycosyltransferase 14 family. Post-translationally, N-glycosylated. Primarily expressed in mucus-secreting tissues. Expressed in colon, kidney, small intestine, trachea, and stomach, where mucin is produced.

Its subcellular location is the golgi apparatus membrane. The catalysed reaction is a 3-O-[beta-D-galactosyl-(1-&gt;3)-N-acetyl-alpha-D-galactosaminyl]-L-seryl-[protein] + UDP-N-acetyl-alpha-D-glucosamine = 3-O-{beta-D-galactosyl-(1-&gt;3)-[N-acetyl-beta-D-glucosaminyl-(1-&gt;6)]-N-acetyl-alpha-D-galactosaminyl}-L-seryl-[protein] + UDP + H(+). It catalyses the reaction a 3-O-[beta-D-galactosyl-(1-&gt;3)-N-acetyl-alpha-D-galactosaminyl]-L-threonyl-[protein] + UDP-N-acetyl-alpha-D-glucosamine = a 3-O-{beta-D-galactosyl-(1-&gt;3)-[N-acetyl-beta-D-glucosaminyl-(1-&gt;6)]-N-acetyl-alpha-D-galactosaminyl}-L-threonyl-[protein] + UDP + H(+). It carries out the reaction a beta-D-Gal-(1-&gt;4)-beta-D-GlcNAc-(1-&gt;3)-beta-D-Gal-(1-&gt;4)-beta-D-GlcNAc derivative + UDP-N-acetyl-alpha-D-glucosamine = a beta-D-Gal-(1-&gt;4)-beta-D-GlcNAc-(1-&gt;3)-[beta-D-GlcNAc-(1-&gt;6)]-beta-D-Gal-(1-&gt;4)-N-acetyl-beta-D-glucosaminyl derivative + UDP + H(+). The enzyme catalyses 3-O-[N-acetyl-beta-D-glucosaminyl-(1-&gt;3)-N-acetyl-alpha-D-galactosaminyl]-L-seryl-[protein] + UDP-N-acetyl-alpha-D-glucosamine = 3-O-[N-acetyl-beta-D-glucosaminyl-(1-&gt;3)-[N-acetyl-beta-D-glucosaminyl-(1-&gt;6)]-N-acetyl-alpha-D-galactosaminyl]-L-seryl-[protein] + UDP + H(+). The catalysed reaction is a 3-O-[N-acetyl-beta-D-glucosaminyl-(1-&gt;3)-N-acetyl-alpha-D-galactosaminyl]-L-threonyl-[protein] + UDP-N-acetyl-alpha-D-glucosamine = 3-O-[N-acetyl-beta-D-glucosaminyl-(1-&gt;3)-[N-acetyl-beta-D-glucosaminyl-(1-&gt;6)]-N-acetyl-alpha-D-galactosaminyl]-L-threonyl-[protein] + UDP + H(+). The protein operates within protein modification; protein glycosylation. Functionally, glycosyltransferase that can synthesize all known mucin beta 6 N-acetylglucosaminides. Mediates core 2 and core 4 O-glycan branching, 2 important steps in mucin-type biosynthesis. Also has I-branching enzyme activity by converting linear into branched poly-N-acetyllactosaminoglycans, leading to introduce the blood group I antigen during embryonic development. The chain is Beta-1,3-galactosyl-O-glycosyl-glycoprotein beta-1,6-N-acetylglucosaminyltransferase 3 (GCNT3) from Homo sapiens (Human).